The chain runs to 557 residues: D-arabinono-1,4-lactone oxidase (557 aa).

Positions 26–209 (FFCKPQAIFQ…THVTLRTIPK (184 aa)) constitute an FAD-binding PCMH-type domain. Position 63 is a pros-8alpha-FAD histidine (His63).

The protein belongs to the oxygen-dependent FAD-linked oxidoreductase family. The cofactor is FAD.

The protein resides in the mitochondrion membrane. The enzyme catalyses D-arabinono-1,4-lactone + O2 = dehydro-D-arabinono-1,4-lactone + H2O2 + H(+). It functions in the pathway cofactor biosynthesis; D-erythroascorbate biosynthesis; dehydro-D-arabinono-1,4-lactone from D-arabinose: step 2/2. The sequence is that of D-arabinono-1,4-lactone oxidase (ALO1) from Debaryomyces hansenii (strain ATCC 36239 / CBS 767 / BCRC 21394 / JCM 1990 / NBRC 0083 / IGC 2968) (Yeast).